A 178-amino-acid chain; its full sequence is Interleukin-10 (178 aa).

Positions 1–18 are cleaved as a signal peptide; the sequence is MHSSALLCCLVLLTGVRA. 2 disulfides stabilise this stretch: Cys30–Cys126 and Cys80–Cys132. N-linked (GlcNAc...) asparagine glycosylation is present at Asn134.

It belongs to the IL-10 family. Homodimer. Interacts with IL10RA and IL10RB.

It localises to the secreted. Its function is as follows. Major immune regulatory cytokine that acts on many cells of the immune system where it has profound anti-inflammatory functions, limiting excessive tissue disruption caused by inflammation. Mechanistically, IL10 binds to its heterotetrameric receptor comprising IL10RA and IL10RB leading to JAK1 and STAT2-mediated phosphorylation of STAT3. In turn, STAT3 translocates to the nucleus where it drives expression of anti-inflammatory mediators. Targets antigen-presenting cells (APCs) such as macrophages and monocytes and inhibits their release of pro-inflammatory cytokines including granulocyte-macrophage colony-stimulating factor /GM-CSF, granulocyte colony-stimulating factor/G-CSF, IL-1 alpha, IL-1 beta, IL-6, IL-8 and TNF-alpha. Also interferes with antigen presentation by reducing the expression of MHC-class II and co-stimulatory molecules, thereby inhibiting their ability to induce T cell activation. In addition, controls the inflammatory response of macrophages by reprogramming essential metabolic pathways including mTOR signaling. In Pan troglodytes (Chimpanzee), this protein is Interleukin-10 (IL10).